We begin with the raw amino-acid sequence, 472 residues long: Interferon-induced protein with tetratricopeptide repeats 2 (472 aa).

Position 2 is an N-acetylserine (serine 2). TPR repeat units lie at residues 51–89 (ATMCNLLAYLKHLKGQNEAALECLRKAEELIQQEHADQA), 90–135 (EIRS…RIES), 136–171 (PELDCEEGWTRLKCGGNQNERAKVCFEKALEKKPKN), 172–208 (PEFTSGLAIASYRLDNWPPSQNAIDPLRQAIRLNPDN), 247–280 (TDVLRSAAKFYRRKDEPDKAIELLKKALEYIPNN), 281–335 (AYLH…NLFR), 336–366 (VCSILASLHALADQYEDAEYYFQKEFSKELT), 367–405 (PVAKQLLHLRYGNFQLYQMKCEDKAIHHFIEGVKINQKS), and 406–448 (REKE…KMQQ). The interval 446–472 (MQQADEDSERGLESGSLIPSASSWNGE) is disordered. A compositionally biased stretch (polar residues) spans 462 to 472 (LIPSASSWNGE).

It belongs to the IFIT family. In terms of assembly, domain-swapped homodimer. Component of an interferon-dependent multiprotein complex, at least composed of IFIT1, IFIT2 and IFIT3. Interacts with IFIT1 and IFIT3. Interacts with STING1/MITA and disrupts its interaction with MAVS or TBK1. Interacts with EIF3E and EIF3C.

The protein localises to the cytoplasm. The protein resides in the endoplasmic reticulum. Its function is as follows. IFN-induced antiviral protein which inhibits expression of viral messenger RNAs lacking 2'-O-methylation of the 5' cap. The ribose 2'-O-methylation would provide a molecular signature to distinguish between self and non-self mRNAs by the host during viral infection. Viruses evolved several ways to evade this restriction system such as encoding their own 2'-O-methylase for their mRNAs or by stealing host cap containing the 2'-O-methylation (cap snatching mechanism). Binds AU-rich viral RNAs, with or without 5' triphosphorylation, RNA-binding is required for antiviral activity. Can promote apoptosis. The sequence is that of Interferon-induced protein with tetratricopeptide repeats 2 (IFIT2) from Homo sapiens (Human).